The chain runs to 270 residues: 4-hydroxy-tetrahydrodipicolinate reductase (270 aa).

NAD(+) is bound by residues 11-16 (GAGGRM) and Glu37. Arg38 serves as a coordination point for NADP(+). Residues 101–103 (GTT) and 125–128 (APNM) contribute to the NAD(+) site. Residue His158 is the Proton donor/acceptor of the active site. (S)-2,3,4,5-tetrahydrodipicolinate is bound at residue His159. Residue Lys162 is the Proton donor of the active site. (S)-2,3,4,5-tetrahydrodipicolinate is bound at residue 168-169 (GT).

The protein belongs to the DapB family.

It localises to the cytoplasm. It carries out the reaction (S)-2,3,4,5-tetrahydrodipicolinate + NAD(+) + H2O = (2S,4S)-4-hydroxy-2,3,4,5-tetrahydrodipicolinate + NADH + H(+). It catalyses the reaction (S)-2,3,4,5-tetrahydrodipicolinate + NADP(+) + H2O = (2S,4S)-4-hydroxy-2,3,4,5-tetrahydrodipicolinate + NADPH + H(+). Its pathway is amino-acid biosynthesis; L-lysine biosynthesis via DAP pathway; (S)-tetrahydrodipicolinate from L-aspartate: step 4/4. In terms of biological role, catalyzes the conversion of 4-hydroxy-tetrahydrodipicolinate (HTPA) to tetrahydrodipicolinate. This chain is 4-hydroxy-tetrahydrodipicolinate reductase, found in Shewanella sp. (strain ANA-3).